We begin with the raw amino-acid sequence, 164 residues long: ATP synthase subunit b 2 (164 aa).

A helical transmembrane segment spans residues 4 to 24; the sequence is TFWAFVGLVLFLALLVYFEVP.

The protein belongs to the ATPase B chain family. As to quaternary structure, F-type ATPases have 2 components, F(1) - the catalytic core - and F(0) - the membrane proton channel. F(1) has five subunits: alpha(3), beta(3), gamma(1), delta(1), epsilon(1). F(0) has three main subunits: a(1), b(2) and c(10-14). The alpha and beta chains form an alternating ring which encloses part of the gamma chain. F(1) is attached to F(0) by a central stalk formed by the gamma and epsilon chains, while a peripheral stalk is formed by the delta and b chains.

The protein localises to the cell inner membrane. In terms of biological role, f(1)F(0) ATP synthase produces ATP from ADP in the presence of a proton or sodium gradient. F-type ATPases consist of two structural domains, F(1) containing the extramembraneous catalytic core and F(0) containing the membrane proton channel, linked together by a central stalk and a peripheral stalk. During catalysis, ATP synthesis in the catalytic domain of F(1) is coupled via a rotary mechanism of the central stalk subunits to proton translocation. Functionally, component of the F(0) channel, it forms part of the peripheral stalk, linking F(1) to F(0). The protein is ATP synthase subunit b 2 of Bartonella henselae (strain ATCC 49882 / DSM 28221 / CCUG 30454 / Houston 1) (Rochalimaea henselae).